The chain runs to 360 residues: Arginase, non-hepatic 1 (360 aa).

The Mn(2+) site is built by His-122, Asp-145, His-147, and Asp-149. Substrate is bound by residues 147-151, 158-160, and Asp-204; these read HADIN and SGN. The Mn(2+) site is built by Asp-253 and Asp-255. Thr-267 and Glu-298 together coordinate substrate.

This sequence belongs to the arginase family. As to quaternary structure, homotrimer. The cofactor is Mn(2+). In terms of tissue distribution, expressed at differing tadpole stages in tail, intestine, hindlimb and trunk region. Most abundant in tadpole tail.

The catalysed reaction is L-arginine + H2O = urea + L-ornithine. Its pathway is nitrogen metabolism; urea cycle; L-ornithine and urea from L-arginine: step 1/1. As well as its role in the urea cycle, may be involved in tissue remodeling. The sequence is that of Arginase, non-hepatic 1 (arg2-a) from Xenopus laevis (African clawed frog).